Reading from the N-terminus, the 274-residue chain is Probable eukaryotic translation initiation factor 3 subunit J (274 aa).

2 disordered regions span residues 1 to 110 and 207 to 245; these read MDSW…KEAM and KEQQEKTQSKRGAAAPAAKPVSTAAPSKKGGKPTVNVNS. Positions 38–47 are enriched in acidic residues; that stretch reads DEEDEDEEEN. Residues 52 to 73 show a composition bias toward low complexity; it reads QNDSHSVSQKSSSSSQNDQGSN. Over residues 82–110 the composition is skewed to basic and acidic residues; sequence IQERNFEKAIKASEAAAKEESLESSKEAM. The span at 219–234 shows a compositional bias: low complexity; the sequence is AAAPAAKPVSTAAPSK.

This sequence belongs to the eIF-3 subunit J family. Component of the eukaryotic translation initiation factor 3 (eIF-3) complex. The eIF-3 complex appears to include tif32/eif3a, SPAC25G10.08/eif3b, tif33/eif3c, SPBC4C3.07/eif3f, tif35/eif3g and sum1/eif3i. This set of common subunits may also associate exclusively with either moe1/eif3d and int6/eif3e, or with SPAC821.05/eif3h and SPAC1751.03/eif3m. The eIF-3 complex may also include SPAC3A12.13c/eif3j. Interacts with sad1.

It localises to the cytoplasm. In terms of biological role, component of the eukaryotic translation initiation factor 3 (eIF-3) complex, which is involved in protein synthesis of a specialized repertoire of mRNAs and, together with other initiation factors, stimulates binding of mRNA and methionyl-tRNAi to the 40S ribosome. The eIF-3 complex specifically targets and initiates translation of a subset of mRNAs involved in cell proliferation. This chain is Probable eukaryotic translation initiation factor 3 subunit J, found in Schizosaccharomyces pombe (strain 972 / ATCC 24843) (Fission yeast).